Here is a 572-residue protein sequence, read N- to C-terminus: Transmembrane glycoprotein NMB (572 aa).

Positions 1-22 (MECLYYFLGFLLLAARLPLDAA) are cleaved as a signal peptide. Topologically, residues 23-498 (KRFHDVLGNE…DPASPLRMAN (476 aa)) are extracellular. The short motif at 64–66 (RGD) is the Cell attachment site element. Residues asparagine 93, asparagine 134, asparagine 146, asparagine 200, asparagine 249, asparagine 275, asparagine 296, asparagine 300, asparagine 306, and asparagine 312 are each glycosylated (N-linked (GlcNAc...) asparagine). Residues 240–327 (VTMFQKNDRN…AAPGPCPPPP (88 aa)) form the PKD domain. Residues 320 to 362 (PGPCPPPPPPPRPSKPTPSLATTLKSYDSNTPGPAGDNPLELS) form a disordered region. Over residues 321 to 335 (GPCPPPPPPPRPSKP) the composition is skewed to pro residues. The span at 338 to 351 (SLATTLKSYDSNTP) shows a compositional bias: polar residues. 2 N-linked (GlcNAc...) asparagine glycosylation sites follow: asparagine 459 and asparagine 467. A helical transmembrane segment spans residues 499–519 (SALISVGCLAIFVTVISLLVY). Topologically, residues 520–572 (KKHKEYNPIENSPGNVVRSKGLSVFLNRAKAVFFPGNQEKDPLLKNQEFKGVS) are cytoplasmic. The residue at position 542 (serine 542) is a Phosphoserine.

This sequence belongs to the PMEL/NMB family. As to expression, widely expressed, but very low expression, if any, in the brain. Expressed in the epidermis with higher levels in melanocytes compared with keratinocytes and Langerhans cells (at protein level). Expressed in peripheral blood, but not bone marrow mononuclear cells. Expressed in tissue macrophages, including liver Kuppfer cells and lung alveolar macrophages, in podocytes and in some cells of the ciliary body of the eye (at protein level). May be overexpressed in various cancers, including melanoma and glioblastoma multiforme.

Its subcellular location is the cell membrane. The protein localises to the melanosome membrane. It localises to the early endosome membrane. In terms of biological role, could be a melanogenic enzyme. In Homo sapiens (Human), this protein is Transmembrane glycoprotein NMB (GPNMB).